The primary structure comprises 230 residues: Flagellar L-ring protein (230 aa).

Positions 1-21 (MMLKTVLRLPVCAALLALAAG) are cleaved as a signal peptide. Residue C22 is the site of N-palmitoyl cysteine attachment. A lipid anchor (S-diacylglycerol cysteine) is attached at C22. Residues 34-53 (PLTAPPPPPPQPSARPNGSI) form a disordered region. Residues 36 to 46 (TAPPPPPPQPS) are compositionally biased toward pro residues.

It belongs to the FlgH family. The basal body constitutes a major portion of the flagellar organelle and consists of four rings (L,P,S, and M) mounted on a central rod.

The protein resides in the cell outer membrane. The protein localises to the bacterial flagellum basal body. Assembles around the rod to form the L-ring and probably protects the motor/basal body from shearing forces during rotation. This chain is Flagellar L-ring protein, found in Bordetella bronchiseptica (strain ATCC BAA-588 / NCTC 13252 / RB50) (Alcaligenes bronchisepticus).